The following is a 315-amino-acid chain: Alpha- and gamma-adaptin-binding protein p34 (315 aa).

Residues 197-234 (IGSADPCHPEQPHLPAADSTESLSDHRGGASNTTDAQV) are disordered. Phosphoserine occurs at positions 310 and 311.

As to quaternary structure, associated with AP-1 and AP-2 complexes. In terms of tissue distribution, widely expressed, including in skin and keratinocytes, with highest levels in adrenal gland, rectum and thymus.

The protein localises to the cytoplasm. It is found in the cytosol. Its function is as follows. May be involved in endocytic recycling of growth factor receptors such as EGFR. The protein is Alpha- and gamma-adaptin-binding protein p34 (AAGAB) of Homo sapiens (Human).